Here is an 89-residue protein sequence, read N- to C-terminus: Large ribosomal subunit protein bL27 (89 aa).

Positions 1–21 (MAHKKAGGSSRNGRDSKGKRL) are disordered.

The protein belongs to the bacterial ribosomal protein bL27 family.

This Bradyrhizobium sp. (strain BTAi1 / ATCC BAA-1182) protein is Large ribosomal subunit protein bL27.